The following is a 425-amino-acid chain: Lipoyl synthase, mitochondrial (425 aa).

The N-terminal 33 residues, 1 to 33 (MAASSTRLRCLYASSSTWKTSPSQSLISLSRRY), are a transit peptide targeting the mitochondrion. The segment at 17–55 (TWKTSPSQSLISLSRRYATTSSAPPTPSDESSSTLPKRR) is disordered. Positions 33–51 (YATTSSAPPTPSDESSSTL) are enriched in polar residues. Positions 142, 147, 153, 173, 177, 180, and 388 each coordinate [4Fe-4S] cluster. One can recognise a Radical SAM core domain in the interval 156 to 377 (GSDKSAATAT…RQRALEMGFL (222 aa)).

The protein belongs to the radical SAM superfamily. Lipoyl synthase family. The cofactor is [4Fe-4S] cluster.

The protein resides in the mitochondrion. The catalysed reaction is [[Fe-S] cluster scaffold protein carrying a second [4Fe-4S](2+) cluster] + N(6)-octanoyl-L-lysyl-[protein] + 2 oxidized [2Fe-2S]-[ferredoxin] + 2 S-adenosyl-L-methionine + 4 H(+) = [[Fe-S] cluster scaffold protein] + N(6)-[(R)-dihydrolipoyl]-L-lysyl-[protein] + 4 Fe(3+) + 2 hydrogen sulfide + 2 5'-deoxyadenosine + 2 L-methionine + 2 reduced [2Fe-2S]-[ferredoxin]. It functions in the pathway protein modification; protein lipoylation via endogenous pathway; protein N(6)-(lipoyl)lysine from octanoyl-[acyl-carrier-protein]: step 2/2. In terms of biological role, catalyzes the radical-mediated insertion of two sulfur atoms into the C-6 and C-8 positions of the octanoyl moiety bound to the lipoyl domains of lipoate-dependent enzymes, thereby converting the octanoylated domains into lipoylated derivatives. This chain is Lipoyl synthase, mitochondrial, found in Talaromyces marneffei (strain ATCC 18224 / CBS 334.59 / QM 7333) (Penicillium marneffei).